The chain runs to 173 residues: Shikimate kinase (173 aa).

14 to 19 (GAGKST) is an ATP binding site. Ser18 serves as a coordination point for Mg(2+). Residues Asp36, Arg60, and Gly82 each contribute to the substrate site. Arg120 is a binding site for ATP. Substrate is bound at residue Arg139. Gln156 is a binding site for ATP.

This sequence belongs to the shikimate kinase family. In terms of assembly, monomer. Mg(2+) is required as a cofactor.

Its subcellular location is the cytoplasm. The enzyme catalyses shikimate + ATP = 3-phosphoshikimate + ADP + H(+). It participates in metabolic intermediate biosynthesis; chorismate biosynthesis; chorismate from D-erythrose 4-phosphate and phosphoenolpyruvate: step 5/7. In terms of biological role, catalyzes the specific phosphorylation of the 3-hydroxyl group of shikimic acid using ATP as a cosubstrate. The sequence is that of Shikimate kinase from Actinobacillus pleuropneumoniae serotype 5b (strain L20).